We begin with the raw amino-acid sequence, 306 residues long: Oxygen-dependent coproporphyrinogen-III oxidase (306 aa).

S94 serves as a coordination point for substrate. A divalent metal cation-binding residues include H98 and H108. H108 functions as the Proton donor in the catalytic mechanism. 110-112 (NVR) serves as a coordination point for substrate. Residues H147 and H177 each contribute to the a divalent metal cation site. An important for dimerization region spans residues 242–277 (YVEFNLVYDRGTLFGLQTGGRTESILMSMPPLVRWE). 260–262 (GGR) is a substrate binding site.

Belongs to the aerobic coproporphyrinogen-III oxidase family. Homodimer. It depends on a divalent metal cation as a cofactor.

It localises to the cytoplasm. It catalyses the reaction coproporphyrinogen III + O2 + 2 H(+) = protoporphyrinogen IX + 2 CO2 + 2 H2O. It functions in the pathway porphyrin-containing compound metabolism; protoporphyrin-IX biosynthesis; protoporphyrinogen-IX from coproporphyrinogen-III (O2 route): step 1/1. In terms of biological role, involved in the heme biosynthesis. Catalyzes the aerobic oxidative decarboxylation of propionate groups of rings A and B of coproporphyrinogen-III to yield the vinyl groups in protoporphyrinogen-IX. The chain is Oxygen-dependent coproporphyrinogen-III oxidase from Shewanella woodyi (strain ATCC 51908 / MS32).